The primary structure comprises 276 residues: NH(3)-dependent NAD(+) synthetase (276 aa).

43–50 (GISGGVDS) contributes to the ATP binding site. Residue D49 participates in Mg(2+) binding. R146 lines the deamido-NAD(+) pocket. T166 contacts ATP. E171 contacts Mg(2+). Deamido-NAD(+)-binding residues include K179 and D186. Positions 195 and 217 each coordinate ATP. Residue 266–267 (HK) participates in deamido-NAD(+) binding.

Belongs to the NAD synthetase family. As to quaternary structure, homodimer.

It catalyses the reaction deamido-NAD(+) + NH4(+) + ATP = AMP + diphosphate + NAD(+) + H(+). The protein operates within cofactor biosynthesis; NAD(+) biosynthesis; NAD(+) from deamido-NAD(+) (ammonia route): step 1/1. Its function is as follows. Catalyzes the ATP-dependent amidation of deamido-NAD to form NAD. Uses ammonia as a nitrogen source. This Vibrio vulnificus (strain YJ016) protein is NH(3)-dependent NAD(+) synthetase.